The following is a 600-amino-acid chain: Elongation factor 4 (600 aa).

The tr-type G domain occupies 5 to 187 (KYIRNFSIIA…AIVNKLPPPK (183 aa)). GTP contacts are provided by residues 17 to 22 (DHGKST) and 134 to 137 (NKID).

This sequence belongs to the TRAFAC class translation factor GTPase superfamily. Classic translation factor GTPase family. LepA subfamily.

The protein resides in the cell inner membrane. It catalyses the reaction GTP + H2O = GDP + phosphate + H(+). In terms of biological role, required for accurate and efficient protein synthesis under certain stress conditions. May act as a fidelity factor of the translation reaction, by catalyzing a one-codon backward translocation of tRNAs on improperly translocated ribosomes. Back-translocation proceeds from a post-translocation (POST) complex to a pre-translocation (PRE) complex, thus giving elongation factor G a second chance to translocate the tRNAs correctly. Binds to ribosomes in a GTP-dependent manner. This is Elongation factor 4 from Rickettsia felis (strain ATCC VR-1525 / URRWXCal2) (Rickettsia azadi).